Consider the following 97-residue polypeptide: MKIKDVERYTIPLDVPYGGEALPDGKAPTGTTVEELIKALKKLPPKGLVSHDFGGNSRIIVTHYKPDIDPDCPFEAAMQQAIKEMASATWIPPQYFQ.

This Mycobacterium (Mycobacteriophage L5) protein is Gene 45 protein (45).